Consider the following 414-residue polypeptide: Putative dipeptidase ARB_02715 (414 aa).

Positions 1-20 (MAALFVSLLALTSLVPVQGA) are cleaved as a signal peptide. Residues histidine 45, aspartate 47, and glutamate 157 each contribute to the Zn(2+) site. A disulfide bond links cysteine 96 and cysteine 186. A substrate-binding site is contributed by histidine 184. Zn(2+) contacts are provided by histidine 228 and histidine 249. Residues arginine 260 and aspartate 320 each contribute to the substrate site. Residue asparagine 392 is glycosylated (N-linked (GlcNAc...) asparagine).

It belongs to the metallo-dependent hydrolases superfamily. Peptidase M19 family. Zn(2+) serves as cofactor.

The enzyme catalyses an L-aminoacyl-L-amino acid + H2O = 2 an L-alpha-amino acid. Its function is as follows. Hydrolyzes a wide range of dipeptides. The polypeptide is Putative dipeptidase ARB_02715 (Arthroderma benhamiae (strain ATCC MYA-4681 / CBS 112371) (Trichophyton mentagrophytes)).